The following is a 345-amino-acid chain: Uroporphyrinogen decarboxylase (345 aa).

Substrate is bound by residues 27–31 (RQAGR), phenylalanine 46, aspartate 76, tyrosine 152, serine 207, and histidine 321.

It belongs to the uroporphyrinogen decarboxylase family. As to quaternary structure, homodimer.

It is found in the cytoplasm. It carries out the reaction uroporphyrinogen III + 4 H(+) = coproporphyrinogen III + 4 CO2. It participates in porphyrin-containing compound metabolism; protoporphyrin-IX biosynthesis; coproporphyrinogen-III from 5-aminolevulinate: step 4/4. In terms of biological role, catalyzes the decarboxylation of four acetate groups of uroporphyrinogen-III to yield coproporphyrinogen-III. The polypeptide is Uroporphyrinogen decarboxylase (Staphylococcus aureus (strain bovine RF122 / ET3-1)).